The following is a 357-amino-acid chain: Uroporphyrinogen decarboxylase (357 aa).

Residues 34–38, D83, Y158, S213, and H336 contribute to the substrate site; that span reads RQAGR.

The protein belongs to the uroporphyrinogen decarboxylase family. Homodimer.

Its subcellular location is the cytoplasm. It catalyses the reaction uroporphyrinogen III + 4 H(+) = coproporphyrinogen III + 4 CO2. It functions in the pathway porphyrin-containing compound metabolism; protoporphyrin-IX biosynthesis; coproporphyrinogen-III from 5-aminolevulinate: step 4/4. Its function is as follows. Catalyzes the decarboxylation of four acetate groups of uroporphyrinogen-III to yield coproporphyrinogen-III. In Mycolicibacterium paratuberculosis (strain ATCC BAA-968 / K-10) (Mycobacterium paratuberculosis), this protein is Uroporphyrinogen decarboxylase.